Reading from the N-terminus, the 215-residue chain is Protein GET1 (215 aa).

Residues 1–4 are Lumenal-facing; sequence MINL. The chain crosses the membrane as a helical span at residues 5–24; sequence ALVIFLCTLLNQIVSWVGKS. The Cytoplasmic segment spans residues 25 to 108; that stretch reads VLQEIAFTAY…SFSKKFSTLL (84 aa). Residues 73–94 adopt a coiled-coil conformation; that stretch reads AKLRRKLDKGLADLEKTNNTLS. A helical membrane pass occupies residues 109–129; that stretch reads WLMTTGAQFLLSWWFRKQPIF. The Lumenal segment spans residues 130–153; it reads WLPEGWVPYPVAWLLSFPSAPIGS. A helical transmembrane segment spans residues 154-170; it reads VSSGAWGAICRRVLSTL. Over 171-215 the chain is Cytoplasmic; sequence QEIIQSVLAPSPAATGPVPTGPSSAKNDQPEAKIEALALEHEKLD. The disordered stretch occupies residues 181-202; that stretch reads SPAATGPVPTGPSSAKNDQPEA.

The protein belongs to the WRB/GET1 family. As to quaternary structure, interacts with GET3.

The protein localises to the endoplasmic reticulum membrane. Required for the post-translational delivery of tail-anchored (TA) proteins to the endoplasmic reticulum. Acts as a membrane receptor for soluble GET3, which recognizes and selectively binds the transmembrane domain of TA proteins in the cytosol. This is Protein GET1 from Cryptococcus neoformans var. neoformans serotype D (strain B-3501A) (Filobasidiella neoformans).